The sequence spans 526 residues: Alpha-ketoglutaric semialdehyde dehydrogenase (526 aa).

NADP(+) is bound by residues 159 to 160 (SN), 185 to 188 (KAHS), and 240 to 241 (GS). Glu264 acts as the Proton acceptor in catalysis. Cys301 functions as the Nucleophile in the catalytic mechanism. NADP(+) is bound at residue Glu393.

The protein belongs to the aldehyde dehydrogenase family.

The enzyme catalyses 2,5-dioxopentanoate + NADP(+) + H2O = 2-oxoglutarate + NADPH + 2 H(+). The protein operates within carbohydrate acid metabolism; D-glucarate degradation. Catalyzes the NAD(P)(+)-dependent oxidation of alpha-ketoglutaric semialdehyde (alphaKGSA) to alpha-ketoglutarate in the D-glutarate degradation pathway. This Acinetobacter baylyi (strain ATCC 33305 / BD413 / ADP1) protein is Alpha-ketoglutaric semialdehyde dehydrogenase.